A 115-amino-acid chain; its full sequence is Histidine decarboxylase proenzyme (115 aa).

The residue at position 83 (serine 83) is a Pyruvic acid (Ser).

As to quaternary structure, the proenzyme is a hexamer of identical pi chains; each pi chain monomer is cleaved to form a small (or beta) chain and a large (or alpha) chain by non-hydrolytic self-catalysis. The cofactor is pyruvate.

It carries out the reaction L-histidine + H(+) = histamine + CO2. This chain is Histidine decarboxylase proenzyme, found in Lentilactobacillus buchneri (Lactobacillus buchneri).